A 382-amino-acid chain; its full sequence is Galactose-1-phosphate uridylyltransferase (382 aa).

Zn(2+) is bound by residues C52 and C55. UDP-alpha-D-glucose contacts are provided by residues A61 and 77–78 (ND). H121 contributes to the Zn(2+) binding site. N185 is a binding site for UDP-alpha-D-glucose. H196 is a Zn(2+) binding site. The active-site Tele-UMP-histidine intermediate is the H198. Q200 serves as a coordination point for UDP-alpha-D-glucose. Positions 214, 313, 330, and 332 each coordinate Fe cation. Residues 345-348 (KFLV) and 350-351 (FE) each bind UDP-alpha-D-glucose.

The protein belongs to the galactose-1-phosphate uridylyltransferase type 1 family. Homodimer. Zn(2+) serves as cofactor.

The catalysed reaction is alpha-D-galactose 1-phosphate + UDP-alpha-D-glucose = alpha-D-glucose 1-phosphate + UDP-alpha-D-galactose. It participates in carbohydrate metabolism; galactose metabolism. In terms of biological role, essential for growth on galactose but not for cellulase induction. This chain is Galactose-1-phosphate uridylyltransferase (gal7), found in Hypocrea jecorina (Trichoderma reesei).